The sequence spans 623 residues: Lamin-B2.L (623 aa).

The segment covering 1–18 has biased composition (low complexity); it reads MATTTPSRSTRSSMQSPA. The segment at 1-30 is disordered; sequence MATTTPSRSTRSSMQSPARGTSTPLSPTRI. The tract at residues 2-27 is head; it reads ATTTPSRSTRSSMQSPARGTSTPLSP. The segment covering 19–30 has biased composition (polar residues); sequence RGTSTPLSPTRI. At S26 the chain carries Phosphoserine. The tract at residues 28–64 is coil 1A; sequence TRISRLQEKEELRHLNDRLAVYIDRVRALELENDRLM. In terms of domain architecture, IF rod spans 35–391; it reads EKEELRHLND…KLLEGEEERL (357 aa). The tract at residues 64–74 is linker 1; that stretch reads MVKISEKEEVT. A coil 1B region spans residues 75–211; the sequence is TREVSGIKNL…QSLQEEMDFR (137 aa). Residues 212-235 are linker 2; the sequence is KNIYEEESRETRKRHERRIVEVDR. Positions 236–378 are coil 2; that stretch reads GHHYDYESKL…VKLALDLEIN (143 aa). The segment at 380-592 is tail; it reads YRKLLEGEEE…VTKSVLRNVE (213 aa). Disordered stretches follow at residues 388-473 and 591-623; these read EERL…LSQQ and VEEEEDEDADFGEEDLFHQQGDPRTTSRGCSVM. S396 bears the Phosphoserine mark. The segment covering 398–416 has biased composition (low complexity); the sequence is ESRVTVSRATSSSSSATRT. The short motif at 420–425 is the Nuclear localization signal element; sequence KRRRVE. Polar residues predominate over residues 443 to 473; it reads LGSSRITASEGSSRTITSGQSSTTRFHLSQQ. One can recognise an LTD domain in the interval 468 to 585; the sequence is FHLSQQASAT…EEVAVRTVTK (118 aa). Positions 592–604 are enriched in acidic residues; it reads EEEEDEDADFGEE. The segment covering 612 to 623 has biased composition (polar residues); it reads DPRTTSRGCSVM. C620 is modified (cysteine methyl ester). Residue C620 is the site of S-farnesyl cysteine attachment. The propeptide at 621-623 is removed in mature form; the sequence is SVM.

This sequence belongs to the intermediate filament family. Post-translationally, phosphorylation plays a key role in lamin organization, subcellular localization and nuclear envelope disintegration. Phosphorylation by CDK1 at Ser-26 at the onset of mitosis drives lamin disassembly and nuclear envelope breakdown.

It is found in the nucleus lamina. It localises to the nucleus envelope. The protein localises to the nucleus. The protein resides in the nucleoplasm. Its subcellular location is the nucleus matrix. Functionally, lamins are intermediate filament proteins that assemble into a filamentous meshwork, and which constitute the major components of the nuclear lamina, a fibrous layer on the nucleoplasmic side of the inner nuclear membrane. Lamins provide a framework for the nuclear envelope, bridging the nuclear envelope and chromatin, thereby playing an important role in nuclear assembly, chromatin organization, nuclear membrane and telomere dynamics. The structural integrity of the lamina is strictly controlled by the cell cycle, as seen by the disintegration and formation of the nuclear envelope in prophase and telophase, respectively. In Xenopus laevis (African clawed frog), this protein is Lamin-B2.L (lmnb2.L).